The primary structure comprises 166 residues: Protein-export protein SecB (166 aa).

The protein belongs to the SecB family. As to quaternary structure, homotetramer, a dimer of dimers. One homotetramer interacts with 1 SecA dimer.

It localises to the cytoplasm. Its function is as follows. One of the proteins required for the normal export of preproteins out of the cell cytoplasm. It is a molecular chaperone that binds to a subset of precursor proteins, maintaining them in a translocation-competent state. It also specifically binds to its receptor SecA. In Actinobacillus pleuropneumoniae serotype 7 (strain AP76), this protein is Protein-export protein SecB.